The primary structure comprises 256 residues: ATP synthase subunit a (256 aa).

Residues 1–7 constitute a propeptide, removed in mature form; sequence MLNLFIT. The next 6 helical transmembrane spans lie at 33 to 53, 92 to 112, 122 to 142, 148 to 168, 188 to 208, and 209 to 229; these read FTTF…LNLL, YFPL…ISMI, LIFI…IGLT, FFSL…LVLI, VLSG…LMSM, and SIIT…IVVL.

Belongs to the ATPase A chain family. As to quaternary structure, F-type ATPases have 2 components, CF(1) - the catalytic core - and CF(0) - the membrane proton channel. CF(1) has five subunits: alpha(3), beta(3), gamma(1), delta(1), epsilon(1). CF(0) has three main subunits: a, b and c.

It localises to the mitochondrion inner membrane. Its function is as follows. Mitochondrial membrane ATP synthase (F(1)F(0) ATP synthase or Complex V) produces ATP from ADP in the presence of a proton gradient across the membrane which is generated by electron transport complexes of the respiratory chain. F-type ATPases consist of two structural domains, F(1) - containing the extramembraneous catalytic core and F(0) - containing the membrane proton channel, linked together by a central stalk and a peripheral stalk. During catalysis, ATP synthesis in the catalytic domain of F(1) is coupled via a rotary mechanism of the central stalk subunits to proton translocation. Key component of the proton channel; it may play a direct role in the translocation of protons across the membrane. The polypeptide is ATP synthase subunit a (ATP6) (Kluyveromyces lactis (strain ATCC 8585 / CBS 2359 / DSM 70799 / NBRC 1267 / NRRL Y-1140 / WM37) (Yeast)).